Here is an 805-residue protein sequence, read N- to C-terminus: Transforming acidic coiled-coil-containing protein 1 (805 aa).

Ala2 is subject to N-acetylalanine. Ala2 carries N-myristoyl glycine lipidation. Residues 2-55 (AFSPWQILSPVQWAKWTWSAVRGGAAGEDEAGGPEGDPEEEDSQAETKSLSFSS) form an interaction with LSM7 and SNRPG region. Phosphoserine is present on residues Ser4, Ser10, and Ser44. The tract at residues 23-140 (RGGAAGEDEA…SVKNFREEPE (118 aa)) is disordered. Residues 28–45 (GEDEAGGPEGDPEEEDSQ) show a composition bias toward acidic residues. 2 stretches are compositionally biased toward polar residues: residues 47 to 60 (ETKS…SEGN) and 111 to 128 (SKTC…QAID). Over residues 130 to 140 (HSVKNFREEPE) the composition is skewed to basic and acidic residues. Ser147 and Ser153 each carry phosphoserine. Residues 152 to 259 (FSIETKDSTD…TNAAVEGTPL (108 aa)) form an interaction with TDRD7 region. Residues 206–427 (EASAEADLKA…DPDNFDESMD (222 aa)) are interaction with YEATS4. SPAZ domains lie at 215-297 (AGNS…TPGT) and 359-507 (SKSA…TDEE). The disordered stretch occupies residues 215–457 (AGNSCPELVP…VNEILESPKK (243 aa)). The Bipartite nuclear localization signal 1 signature appears at 226 to 241 (RRSKLRKPKPVPLRKK). Residues 226–242 (RRSKLRKPKPVPLRKKA) are compositionally biased toward basic residues. Ser228 carries the phosphoserine; by AURKC modification. 2 positions are modified to phosphoserine: Ser248 and Ser276. 3 stretches are compositionally biased toward polar residues: residues 296-305 (GTLSSDTNDS), 377-413 (LSQT…SSEG), and 431-447 (PTTT…TGNH). Phosphoserine occurs at positions 381 and 406. Residues 455 to 471 (PKKAKSRLITSGCKVKK) carry the Bipartite nuclear localization signal 2 motif. Ser483 is subject to Phosphoserine. A disordered region spans residues 493–526 (ISDISNRDGHATDEEKLASTSCGQKSAGAEVKGE). Positions 497–509 (SNRDGHATDEEKL) are enriched in basic and acidic residues. The residue at position 533 (Tyr533) is a Phosphotyrosine. Position 591 is a phosphoserine (Ser591). The stretch at 610–805 (IREEIITKEI…ELIAKLGKTD (196 aa)) forms a coiled coil. An interaction with CH-TOG region spans residues 701–805 (VLEGFKKNEE…ELIAKLGKTD (105 aa)).

This sequence belongs to the TACC family. As to quaternary structure, interacts with KIAA0097/CH-TOG and with the oncogenic transcription factor YEATS4. Interacts with AURKA, AURKB and AURKC. Interacts with LSM7, TDRD7 and SNRPG. Interacts with GCN5L2 and PCAF. Interacts with the thyroid hormone receptors THRB and THRA, predominantly with isoform alpha-2. The interaction with THRA isoform alpha-1 and THRB is decreased in the presence of thyroid hormone T3. Also interacts with other nuclear receptors, including ESR1, NR3C1, PPARG, RARA and RXRA, preferentially in the absence of their hormonal ligands. In terms of processing, isoform 1 is heavily phosphorylated; isoform 6 is not. As to expression, isoform 1, isoform 3 and isoform 5 are ubiquitous. Isoform 2 is strongly expressed in the brain, weakly detectable in lung and colon, and overexpressed in gastric cancer. Isoform 4 is not detected in normal tissues, but strong expression was found in gastric cancer tissues. Down-regulated in a subset of cases of breast cancer.

It localises to the cytoplasm. It is found in the nucleus. Its subcellular location is the cytoskeleton. The protein localises to the microtubule organizing center. The protein resides in the centrosome. It localises to the midbody. It is found in the membrane. Functionally, involved in transcription regulation induced by nuclear receptors, including in T3 thyroid hormone and all-trans retinoic acid pathways. Might promote the nuclear localization of the receptors. Likely involved in the processes that promote cell division prior to the formation of differentiated tissues. The chain is Transforming acidic coiled-coil-containing protein 1 (TACC1) from Homo sapiens (Human).